The primary structure comprises 97 residues: uncharacterized protein (97 aa).

3 consecutive transmembrane segments (helical) span residues 5–25 (TLVA…SLSV), 27–47 (MVFV…LICY), and 77–97 (IISI…VFIL).

The protein localises to the membrane. This is an uncharacterized protein from Saccharomyces cerevisiae (strain ATCC 204508 / S288c) (Baker's yeast).